The chain runs to 436 residues: MTNPVVAIVGRPNVGKSTIFNRIVGERISIVEDVPGVTRDRIYSSAEWLNHKFYLIDTGGIDIGDEPLLVQIRQQAEIAIDEADVIIFMVNGRDGVTAADEEVAKILHRSNKPVVLAVNKIDNPEMRDLIYDFYALGFGDPYPISGSHGTGLGDLLDAVARHFPKRGQEEYEEDVIKFCLIGRPNVGKSSLVNAILGEERVIVSDIAGTTRDAVDTTFVREGQEYVIIDTAGMRKRGKIYESTEKYSVLRALKAIERSDVVLVVLNAEEGIIEQDKKIAGYAHEAGRGVIIVVNKWDAIEKDDKTLIEFERKIRDHFPFLDYAPIIFVSAKTKQRLHKLLPLVRMVSENHAMRVQTNVLNEVIMDAVAMNPTPTHNGRRLKIYYMTQVAVKPPTFVVFVNDPELMHFSYERFLENRIRDAFGFEGTPIKIIARPRK.

EngA-type G domains are found at residues 4–167 (PVVA…PKRG) and 176–351 (IKFC…ENHA). GTP is bound by residues 10–17 (GRPNVGKS), 57–61 (DTGGI), 119–122 (NKID), 182–189 (GRPNVGKS), 229–233 (DTAGM), and 294–297 (NKWD). Residues 352 to 436 (MRVQTNVLNE…PIKIIARPRK (85 aa)) enclose the KH-like domain.

This sequence belongs to the TRAFAC class TrmE-Era-EngA-EngB-Septin-like GTPase superfamily. EngA (Der) GTPase family. Associates with the 50S ribosomal subunit.

In terms of biological role, GTPase that plays an essential role in the late steps of ribosome biogenesis. The chain is GTPase Der from Geobacillus sp. (strain WCH70).